The chain runs to 191 residues: Molybdenum cofactor guanylyltransferase (191 aa).

GTP is bound by residues 11–13 (LCG), Lys-23, Asp-66, and Asp-97. Asp-97 contributes to the Mg(2+) binding site.

Belongs to the MobA family. In terms of assembly, monomer. The cofactor is Mg(2+).

It localises to the cytoplasm. The catalysed reaction is Mo-molybdopterin + GTP + H(+) = Mo-molybdopterin guanine dinucleotide + diphosphate. Its function is as follows. Transfers a GMP moiety from GTP to Mo-molybdopterin (Mo-MPT) cofactor (Moco or molybdenum cofactor) to form Mo-molybdopterin guanine dinucleotide (Mo-MGD) cofactor. This chain is Molybdenum cofactor guanylyltransferase, found in Campylobacter jejuni subsp. jejuni serotype O:6 (strain 81116 / NCTC 11828).